A 120-amino-acid polypeptide reads, in one-letter code: uncharacterized protein (120 aa).

It to E.coli YiaW.

This is an uncharacterized protein from Escherichia coli (strain K12).